Reading from the N-terminus, the 139-residue chain is Invertebrate-type lysozyme 2 (139 aa).

The first 18 residues, 1–18 (MFVKAILLLSIAVAYASA), serve as a signal peptide directing secretion. Residues 19 to 138 (DCLHCICMRE…WKGVHSCCGC (120 aa)) enclose the I-type lysozyme domain. 7 cysteine pairs are disulfide-bonded: C20/C106, C23/C138, C25/C31, C36/C45, C58/C86, C76/C82, and C98/C120. E28 functions as the Proton donor in the catalytic mechanism. D39 serves as the catalytic Nucleophile. Residue 51 to 57 (KIPYYED) participates in substrate binding. Residues Y90 and 113-115 (HNG) contribute to the substrate site.

This sequence belongs to the glycosyl hydrolase 22 family. Type-I lysozyme subfamily. Expressed in pharyngeal muscle cell pm3, nerve ring and intestine.

The enzyme catalyses Hydrolysis of (1-&gt;4)-beta-linkages between N-acetylmuramic acid and N-acetyl-D-glucosamine residues in a peptidoglycan and between N-acetyl-D-glucosamine residues in chitodextrins.. In terms of biological role, has bacteriolytic activity against Gram-positive bacteria. May play a role in resistance to Gram-positive bacterium S.aureus infection. In Caenorhabditis elegans, this protein is Invertebrate-type lysozyme 2.